A 51-amino-acid chain; its full sequence is uncharacterized protein (51 aa).

This sequence to E.coli YdaF.

This is an uncharacterized protein from Escherichia coli O157:H7.